A 221-amino-acid chain; its full sequence is Glutathione S-transferase alpha-3 (221 aa).

The GST N-terminal domain occupies Gly-3–Gly-83. Lys-4 bears the N6-succinyllysine mark. Residues Tyr-9, Arg-45, Gln-54 to Val-55, and Gln-67 to Thr-68 contribute to the glutathione site. One can recognise a GST C-terminal domain in the interval Asp-85–Leu-207.

The protein belongs to the GST superfamily. Alpha family. As to quaternary structure, heterodimer of YC1 and YC2.

It localises to the cytoplasm. It carries out the reaction RX + glutathione = an S-substituted glutathione + a halide anion + H(+). It catalyses the reaction androst-5-ene-3,17-dione = androst-4-ene-3,17-dione. The catalysed reaction is pregn-5-ene-3,20-dione = progesterone. Conjugation of reduced glutathione to a wide number of exogenous and endogenous hydrophobic electrophiles. Catalyzes isomerization reactions that contribute to the biosynthesis of steroid hormones. Efficiently catalyze obligatory double-bond isomerizations of delta(5)-androstene-3,17-dione and delta(5)-pregnene-3,20-dione, precursors to testosterone and progesterone, respectively. Has substantial activity toward aflatoxin B1-8,9-epoxide. The sequence is that of Glutathione S-transferase alpha-3 from Rattus norvegicus (Rat).